Here is a 530-residue protein sequence, read N- to C-terminus: Testis-expressed protein 44 (530 aa).

Acidic residues predominate over residues 1 to 10; the sequence is MTAEPLEDPE. Disordered stretches follow at residues 1–85, 207–233, 256–290, and 305–384; these read MTAE…FIRT, ATSA…TSLL, ENNR…QPVL, and QTSV…SPDF. Composition is skewed to polar residues over residues 11 to 26, 222 to 233, and 257 to 280; these read ASSS…SSDN, GQDNPEETTSLL, and NNRT…TLGN. The segment covering 365–381 has biased composition (pro residues); that stretch reads PPDPPDPGSPGGSPPHS. Serine 468 bears the Phosphoserine mark.

It is found in the cytoplasm. The protein is Testis-expressed protein 44 (Tex44) of Mus musculus (Mouse).